The following is a 449-amino-acid chain: Phosphoglucosamine mutase (449 aa).

Serine 102 serves as the catalytic Phosphoserine intermediate. Residues serine 102, aspartate 241, aspartate 243, and aspartate 245 each coordinate Mg(2+). At serine 102 the chain carries Phosphoserine.

The protein belongs to the phosphohexose mutase family. Mg(2+) serves as cofactor. Post-translationally, activated by phosphorylation.

The catalysed reaction is alpha-D-glucosamine 1-phosphate = D-glucosamine 6-phosphate. Its function is as follows. Catalyzes the conversion of glucosamine-6-phosphate to glucosamine-1-phosphate. In Roseobacter denitrificans (strain ATCC 33942 / OCh 114) (Erythrobacter sp. (strain OCh 114)), this protein is Phosphoglucosamine mutase.